The primary structure comprises 370 residues: Natural killer cell receptor 2B4 (370 aa).

An N-terminal signal peptide occupies residues methionine 1–glycine 21. Ig-like domains are found at residues cysteine 22–glutamate 127 and proline 131–threonine 215. Topologically, residues cysteine 22–proline 229 are extracellular. Asparagine 71, asparagine 77, asparagine 89, asparagine 164, asparagine 181, asparagine 192, asparagine 200, and asparagine 213 each carry an N-linked (GlcNAc...) asparagine glycan. Cysteine 157 and cysteine 199 are oxidised to a cystine. A helical membrane pass occupies residues phenylalanine 230 to valine 250. The Cytoplasmic segment spans residues tryptophan 251–serine 370. 4 consecutive short sequence motifs (ITSM) follow at residues threonine 269–valine 274, threonine 295–isoleucine 300, threonine 315–isoleucine 320, and threonine 340–isoleucine 345. Tyrosine 271 bears the Phosphotyrosine mark. Residue tyrosine 297 is modified to Phosphotyrosine; by FYN. The residue at position 317 (tyrosine 317) is a Phosphotyrosine. A disordered region spans residues arginine 324–serine 370. Position 342 is a phosphotyrosine; by FYN (tyrosine 342).

As to quaternary structure, interacts with CD48. Interacts (via phosphorylated ITSM 1-4) with SH2D1A (via SH2 domain); SH2D1A probably mediates association with FYN. Interacts (via phosphorylated ITSM 3) with PTPN11/SHP-2, INPP5D/SHIP1, PTPN6/SHP-1 and CSK; binding of SH2D1A/SAP prevents association with PTPN11, PTPN6 and CSK; conflictingly a similar association has been described for phosphorylated ITSM 1 also including GRB2 and PLCG1. Interacts weakly (via phosphorylated ITSM 2) with PTPN11/SHP-2 and CSK. Interacts with SH2D1B. Interacts with PIK3R1; PI3K recruits SH2D1A. Interacts with MHC class I proteins; the interaction is proposed to prevent self-killing of NK cells. In terms of processing, N-linked glycosylation is essential for the binding to its ligand CD48. Also O-glycosylated, in contrast, O-linked sialylation has a negative impact on ligand binding. Post-translationally, phosphorylated by FYN and CSK on tyrosine residues following activation. Coligation with inhibitory receptors such as KIR2DL1 inhibits phosphorylation upon contact of NK cells with sensitive target cells. Expressed in spleen, PBL, followed by lung, liver, testis and small intestine. Expressed in all natural killer (NK) cells, monocytes and basophils, TCR-gamma/delta+ T-cells, monocytes, basophils, and on a subset of CD8(+) T-cells.

The protein resides in the membrane. The protein localises to the cell membrane. It is found in the membrane raft. Functionally, heterophilic receptor of the signaling lymphocytic activation molecule (SLAM) family; its ligand is CD48. SLAM receptors triggered by homo- or heterotypic cell-cell interactions are modulating the activation and differentiation of a wide variety of immune cells and thus are involved in the regulation and interconnection of both innate and adaptive immune response. Activities are controlled by presence or absence of small cytoplasmic adapter proteins, SH2D1A/SAP and/or SH2D1B/EAT-2. Acts as activating natural killer (NK) cell receptor. Activating function implicates association with SH2D1A and FYN. Downstreaming signaling involves predominantly VAV1, and, to a lesser degree, INPP5D/SHIP1 and CBL. Signal attenuation in the absence of SH2D1A is proposed to be dependent on INPP5D and to a lesser extent PTPN6/SHP-1 and PTPN11/SHP-2. Stimulates NK cell cytotoxicity, production of IFN-gamma and granule exocytosis. Optimal expansion and activation of NK cells seems to be dependent on the engagement of CD244 with CD48 expressed on neighboring NK cells. Acts as costimulator in NK activation by enhancing signals by other NK receptors such as NCR3 and NCR1. At early stages of NK cell differentiation may function as an inhibitory receptor possibly ensuring the self-tolerance of developing NK cells. Involved in the regulation of CD8(+) T-cell proliferation; expression on activated T-cells and binding to CD48 provides costimulatory-like function for neighboring T-cells. Inhibits inflammatory responses in dendritic cells (DCs). This Homo sapiens (Human) protein is Natural killer cell receptor 2B4 (CD244).